A 179-amino-acid polypeptide reads, in one-letter code: MASSATMLSSVATAARAAPAQASMVAPFVGLKSASAFPVTQKPATGLSTLPSNGGRVQCMKVWPIVGLKKFETLSYLPTLSVESLLKQIEYLIRNGWVPCLEFSLEGFVSRDNNKSPGYYDGRYWTMWKLPMFGCTDAAQVVKEAAECKKEYPAAFIRVIGFDNVRQVQCVSFIVEKPE.

Residues 1 to 58 (MASSATMLSSVATAARAAPAQASMVAPFVGLKSASAFPVTQKPATGLSTLPSNGGRVQ) constitute a chloroplast transit peptide.

The protein belongs to the RuBisCO small chain family. In terms of assembly, heterohexadecamer of 8 large and 8 small subunits.

The protein resides in the plastid. It is found in the chloroplast. Functionally, ruBisCO catalyzes two reactions: the carboxylation of D-ribulose 1,5-bisphosphate, the primary event in carbon dioxide fixation, as well as the oxidative fragmentation of the pentose substrate. Both reactions occur simultaneously and in competition at the same active site. Although the small subunit is not catalytic it is essential for maximal activity. In Fritillaria agrestis (Stinkbells), this protein is Ribulose bisphosphate carboxylase small subunit, chloroplastic 3.